Here is a 185-residue protein sequence, read N- to C-terminus: Ribosome-recycling factor (185 aa).

Residues 143 to 163 (RKDGEAGEDEVARAEKDLDKS) form a disordered region.

Belongs to the RRF family.

Its subcellular location is the cytoplasm. Functionally, responsible for the release of ribosomes from messenger RNA at the termination of protein biosynthesis. May increase the efficiency of translation by recycling ribosomes from one round of translation to another. The sequence is that of Ribosome-recycling factor from Mycobacterium marinum (strain ATCC BAA-535 / M).